Consider the following 173-residue polypeptide: Photosystem I assembly protein Ycf3 (173 aa).

TPR repeat units lie at residues 35–68, 72–105, and 120–153; these read AYIY…EENK, GETL…NPKQ, and GRNA…YPGG.

Belongs to the Ycf3 family.

The protein localises to the cellular thylakoid membrane. Its function is as follows. Essential for the assembly of the photosystem I (PSI) complex. May act as a chaperone-like factor to guide the assembly of the PSI subunits. The protein is Photosystem I assembly protein Ycf3 of Prochlorococcus marinus (strain MIT 9312).